The following is a 266-amino-acid chain: ATP synthase subunit a (266 aa).

7 helical membrane passes run 41–61 (IDTLIMSFGLGALFCYVFWLA), 98–118 (VIAPLALTIFCWVFLSNLMDL), 119–139 (VPIDMVPSIMMAVGVDYWKIL), 152–172 (LSVLALIIIYGVMGQGVGGWL), 178–198 (HPLGPWLAPANLILNIVEFIA), 216–236 (LVFILISLLPWWIQWALGTPW), and 237–257 (AIFHILVVPLQAFIFMMLTVV).

It belongs to the ATPase A chain family. F-type ATPases have 2 components, CF(1) - the catalytic core - and CF(0) - the membrane proton channel. CF(1) has five subunits: alpha(3), beta(3), gamma(1), delta(1), epsilon(1). CF(0) has three main subunits: a(1), b(2) and c(9-12). The alpha and beta chains form an alternating ring which encloses part of the gamma chain. CF(1) is attached to CF(0) by a central stalk formed by the gamma and epsilon chains, while a peripheral stalk is formed by the delta and b chains.

The protein localises to the cell inner membrane. Functionally, key component of the proton channel; it plays a direct role in the translocation of protons across the membrane. The polypeptide is ATP synthase subunit a (Halorhodospira halophila (strain DSM 244 / SL1) (Ectothiorhodospira halophila (strain DSM 244 / SL1))).